The primary structure comprises 32 residues: Photosystem I reaction center subunit XII (32 aa).

Residues 10–27 traverse the membrane as a helical segment; sequence VVALVSAFVTGILALRLG.

Belongs to the PsaM family.

Its subcellular location is the plastid. The protein localises to the chloroplast thylakoid membrane. In Staurastrum punctulatum (Green alga), this protein is Photosystem I reaction center subunit XII.